Consider the following 166-residue polypeptide: KH homology domain-containing protein 1C (166 aa).

A KH; atypical domain is found at 19 to 78 (PLVFDMEEDKEDYIFGPHDEYLHTLEVHSNTLIQLERWFTPTGQTRVTVVGPLKARLWVM).

This sequence belongs to the KHDC1 family.

This is KH homology domain-containing protein 1C (Khdc1c) from Mus musculus (Mouse).